Here is a 201-residue protein sequence, read N- to C-terminus: Holliday junction branch migration complex subunit RuvA (201 aa).

The interval 1–64 (MYEYIRGQFQ…EDFIGLYGFT (64 aa)) is domain I. The interval 65 to 143 (TREELEMFKL…PDELTSEEGQ (79 aa)) is domain II. The tract at residues 144–152 (LIEGINDNS) is flexible linker. The interval 153–201 (DYSFNINETLSALMALGYTEKEAQKALEKVDKTLSIENMIKESLKLLMR) is domain III.

This sequence belongs to the RuvA family. As to quaternary structure, homotetramer. Forms an RuvA(8)-RuvB(12)-Holliday junction (HJ) complex. HJ DNA is sandwiched between 2 RuvA tetramers; dsDNA enters through RuvA and exits via RuvB. An RuvB hexamer assembles on each DNA strand where it exits the tetramer. Each RuvB hexamer is contacted by two RuvA subunits (via domain III) on 2 adjacent RuvB subunits; this complex drives branch migration. In the full resolvosome a probable DNA-RuvA(4)-RuvB(12)-RuvC(2) complex forms which resolves the HJ.

Its subcellular location is the cytoplasm. Functionally, the RuvA-RuvB-RuvC complex processes Holliday junction (HJ) DNA during genetic recombination and DNA repair, while the RuvA-RuvB complex plays an important role in the rescue of blocked DNA replication forks via replication fork reversal (RFR). RuvA specifically binds to HJ cruciform DNA, conferring on it an open structure. The RuvB hexamer acts as an ATP-dependent pump, pulling dsDNA into and through the RuvAB complex. HJ branch migration allows RuvC to scan DNA until it finds its consensus sequence, where it cleaves and resolves the cruciform DNA. This chain is Holliday junction branch migration complex subunit RuvA, found in Clostridium perfringens (strain 13 / Type A).